The sequence spans 270 residues: tRNA 2-(methylsulfanyl)-N(6)-isopentenyladenosine(37) hydroxylase (270 aa).

Fe cation contacts are provided by glutamate 59, glutamate 137, histidine 140, glutamate 190, glutamate 219, and histidine 222.

It belongs to the MiaE family. Monomer. Requires Fe cation as cofactor.

The catalysed reaction is 2-methylsulfanyl-N(6)-dimethylallyladenosine(37) in tRNA + AH2 + O2 = N(6)-[(2E)-4-hydroxy-3-methylbut-2-en-1-yl]-2-(methylsulfanyl)adenosine(37) in tRNA + A + H2O. The protein operates within tRNA modification; 2-methylthio-N-6-(cis-hydroxy)isopentenyl adenosine-tRNA biosynthesis. Functionally, involved in specific tRNA modification. Catalyzes the oxygen-dependent hydroxylation of 2-methylthio-N-6-isopentenyl adenosine (ms2i6A) to produce 2-methylthio-N-6-(cis-hydroxy)isopentenyl adenosine (ms2io6A) at position 37 in tRNAs. Can also use N6-(dimethylallyl)adenosine (i6A) as substrate, with lower efficiency. The presence of the hydroxyl group on the tRNA may regulate the ability of S.typhimurium to grow on the citric acid cycle (CAC) intermediates succinate, fumarate and malate. The polypeptide is tRNA 2-(methylsulfanyl)-N(6)-isopentenyladenosine(37) hydroxylase (Salmonella typhimurium (strain LT2 / SGSC1412 / ATCC 700720)).